We begin with the raw amino-acid sequence, 494 residues long: Ubiquinol-cytochrome-c reductase complex core protein I, mitochondrial (494 aa).

A Zn(2+)-binding site is contributed by His-70. The active-site Proton acceptor is Glu-73. His-74 and Glu-150 together coordinate Zn(2+).

It belongs to the peptidase M16 family. UQCRC1/QCR1 subfamily. Component of the ubiquinol-cytochrome c oxidoreductase (cytochrome b-c1 complex, complex III, CIII), a multisubunit enzyme composed of 10 subunits. The complex is composed of 3 respiratory subunits cytochrome b, cytochrome c1 and Rieske protein, 2 core protein subunits, and additional low-molecular weight protein subunits. The complex exists as an obligatory dimer and forms supercomplexes (SCs) in the inner mitochondrial membrane with cytochrome c oxidase (complex IV, CIV). Requires Zn(2+) as cofactor. The N-terminus is blocked.

Its subcellular location is the mitochondrion inner membrane. Its function is as follows. Component of the ubiquinol-cytochrome c oxidoreductase, a multisubunit transmembrane complex that is part of the mitochondrial electron transport chain which drives oxidative phosphorylation. The respiratory chain contains 3 multisubunit complexes succinate dehydrogenase (complex II, CII), ubiquinol-cytochrome c oxidoreductase (cytochrome b-c1 complex, complex III, CIII) and cytochrome c oxidase (complex IV, CIV), that cooperate to transfer electrons derived from NADH and succinate to molecular oxygen, creating an electrochemical gradient over the inner membrane that drives transmembrane transport and the ATP synthase. The cytochrome b-c1 complex catalyzes electron transfer from ubiquinol to cytochrome c, linking this redox reaction to translocation of protons across the mitochondrial inner membrane, with protons being carried across the membrane as hydrogens on the quinol. In the process called Q cycle, 2 protons are consumed from the matrix, 4 protons are released into the intermembrane space and 2 electrons are passed to cytochrome c. In Euglena gracilis, this protein is Ubiquinol-cytochrome-c reductase complex core protein I, mitochondrial.